The following is a 1464-amino-acid chain: Glutamate receptor ionotropic, NMDA 2A (1464 aa).

The N-terminal stretch at 1–22 (MGRVGYWTLLVLPALLVWRGPA) is a signal peptide. Residues 23-556 (PSAAAEKGPP…SAFLEPFSAS (534 aa)) lie on the Extracellular side of the membrane. Residue His-44 participates in Zn(2+) binding. Asn-75 is a glycosylation site (N-linked (GlcNAc...) asparagine). An intrachain disulfide couples Cys-87 to Cys-320. His-128, Glu-266, and Asp-282 together coordinate Zn(2+). Residues Asn-340, Asn-380, Asn-443, and Asn-444 are each glycosylated (N-linked (GlcNAc...) asparagine). 2 disulfides stabilise this stretch: Cys-429–Cys-455 and Cys-436–Cys-456. L-glutamate-binding residues include Ser-511, Thr-513, and Arg-518. Asn-541 carries N-linked (GlcNAc...) asparagine glycosylation. The helical transmembrane segment at 557 to 576 (VWVMMFVMLLIVSAIAVFVF) threads the bilayer. Residues 577-600 (EYFSPVGYNRNLAKGKAPHGPSFT) lie on the Cytoplasmic side of the membrane. The tract at residues 599–620 (FTIGKAIWLLWGLVFNNSVPVQ) is pore-forming. The segment at residues 601 to 615 (IGKAIWLLWGLVFNN) is an intramembrane region (discontinuously helical). The Cytoplasmic portion of the chain corresponds to 616–625 (SVPVQNPKGT). The chain crosses the membrane as a helical span at residues 626 to 646 (TSKIMVSVWAFFAVIFLASYT). Over 647 to 814 (ANLAAFMIQE…NEVMSSQLDI (168 aa)) the chain is Extracellular. An N-linked (GlcNAc...) asparagine glycan is attached at Asn-687. Residues Ser-689, Thr-690, and Asp-731 each contribute to the L-glutamate site. Cys-745 and Cys-800 are joined by a disulfide. A helical transmembrane segment spans residues 815 to 835 (DNMAGVFYMLAAAMALSLITF). Residues 836 to 1464 (IWEHLFYWKL…KKMPSIESDV (629 aa)) are Cytoplasmic-facing. Phosphoserine occurs at positions 882, 890, and 929. 2 stretches are compositionally biased toward polar residues: residues 997–1010 (EVAV…NSRP) and 1023–1032 (QDSLSQNPVS). Residues 997–1083 (EVAVSTESKA…PDNSKNHKTK (87 aa)) are disordered. Phosphoserine is present on Ser-1025. Basic and acidic residues-rich tracts occupy residues 1033–1043 (QRDEATAENRT) and 1052–1061 (LPEEMAHSDI). Phosphoserine occurs at positions 1059 and 1062. The segment covering 1070-1083 (CHREPDNSKNHKTK) has biased composition (basic and acidic residues). Ser-1198 and Ser-1291 each carry phosphoserine. Residues 1335-1372 (KLSGKKSSLFPQGLEDSKRSKSLLPDHTSDNPFLHSHR) form a disordered region. Positions 1462–1464 (SDV) match the PDZ-binding motif.

This sequence belongs to the glutamate-gated ion channel (TC 1.A.10.1) family. NR2A/GRIN2A subfamily. Heterotetramer. Forms heterotetrameric channels composed of two GluN1/zeta subunits (GRIN1), and two identical GluN2/epsilon subunits (GRIN2A, GRIN2B, GRIN2C or GRIN2D) or GluN3 subunits (GRIN3A or GRIN3B) (in vitro). Can also form heterotetrameric channels that contain at least two GluN1 subunits and at least two different GluN2 subunits (or a combination of one GluN2 and one GluN3 subunits) (in vitro). In vivo, the subunit composition may depend on the expression levels of the different subunits. Found in a complex with GRIN1, GRIN3A and PPP2CB. Found in a complex with GRIN1 and GRIN3B. Interacts with AIP1. Interacts with HIP1 and NETO1. Interacts with SNX27 (via PDZ domain); the interaction is required for recycling to the plasma membrane when endocytosed and prevent degradation in lysosomes. Interacts with PDZ domains of PATJ and DLG4. Interacts with LRFN2. Interacts with RPH3A and DLG4; this ternary complex regulates NMDA receptor composition at postsynaptic membranes. Interacts with SORCS2. Interacts with ARC; preventing ARC oligomerization. Interacts (via the extreme C-terminus) with FRMPD2 (the second PDZ domain); the interaction is direct and is likely to promote NMDAR-mediated neural signal transmission. GRIN2A binds FRMPD2 with lower affinity than GRIN2B.

It localises to the cell projection. It is found in the dendritic spine. Its subcellular location is the cell membrane. The protein resides in the synapse. The protein localises to the postsynaptic cell membrane. It localises to the cytoplasmic vesicle membrane. It carries out the reaction Ca(2+)(in) = Ca(2+)(out). The catalysed reaction is Na(+)(in) = Na(+)(out). The enzyme catalyses K(+)(in) = K(+)(out). Its activity is regulated as follows. NMDA glutamate receptor activity is inhibited by endogenous Mg(2+) in a voltage-dependent manner. NMDA glutamate receptor activity is inhibited by endogenous Zn(2+). NMDA glutamate receptor activity is inhibited by endogenous protons. Component of N-methyl-D-aspartate (NMDA) receptors (NMDARs) that function as heterotetrameric, ligand-gated cation channels with high calcium permeability and voltage-dependent block by Mg(2+). NMDARs participate in synaptic plasticity for learning and memory formation by contributing to the slow phase of excitatory postsynaptic current, long-term synaptic potentiation, and learning. Channel activation requires binding of the neurotransmitter L-glutamate to the GluN2 subunit, glycine or D-serine binding to the GluN1 subunit, plus membrane depolarization to eliminate channel inhibition by Mg(2+). NMDARs mediate simultaneously the potasium efflux and the influx of calcium and sodium. Each GluN2 subunit confers differential attributes to channel properties, including activation, deactivation and desensitization kinetics, pH sensitivity, Ca2(+) permeability, and binding to allosteric modulators. Participates in the synaptic plasticity regulation through activation by the L-glutamate releaseed by BEST1, into the synaptic cleft, upon F2R/PAR-1 activation in astrocyte. The sequence is that of Glutamate receptor ionotropic, NMDA 2A from Homo sapiens (Human).